Consider the following 189-residue polypeptide: Peptidyl-tRNA hydrolase (189 aa).

Tyr14 is a tRNA binding site. The active-site Proton acceptor is His19. Tyr64, Asn66, and Asn112 together coordinate tRNA.

It belongs to the PTH family. Monomer.

The protein resides in the cytoplasm. The catalysed reaction is an N-acyl-L-alpha-aminoacyl-tRNA + H2O = an N-acyl-L-amino acid + a tRNA + H(+). In terms of biological role, hydrolyzes ribosome-free peptidyl-tRNAs (with 1 or more amino acids incorporated), which drop off the ribosome during protein synthesis, or as a result of ribosome stalling. Its function is as follows. Catalyzes the release of premature peptidyl moieties from peptidyl-tRNA molecules trapped in stalled 50S ribosomal subunits, and thus maintains levels of free tRNAs and 50S ribosomes. This is Peptidyl-tRNA hydrolase from Brevibacillus brevis (strain 47 / JCM 6285 / NBRC 100599).